The chain runs to 339 residues: Anthranilate phosphoribosyltransferase (339 aa).

Residues glycine 80, 83-84 (GD), 90-93 (NVST), 108-116 (KHGNRSVTS), and serine 120 each bind 5-phospho-alpha-D-ribose 1-diphosphate. Glycine 80 contacts anthranilate. Serine 92 is a Mg(2+) binding site. Asparagine 111 is an anthranilate binding site. Arginine 166 contacts anthranilate. Positions 225 and 226 each coordinate Mg(2+).

The protein belongs to the anthranilate phosphoribosyltransferase family. In terms of assembly, homodimer. The cofactor is Mg(2+).

It catalyses the reaction N-(5-phospho-beta-D-ribosyl)anthranilate + diphosphate = 5-phospho-alpha-D-ribose 1-diphosphate + anthranilate. The protein operates within amino-acid biosynthesis; L-tryptophan biosynthesis; L-tryptophan from chorismate: step 2/5. Its function is as follows. Catalyzes the transfer of the phosphoribosyl group of 5-phosphorylribose-1-pyrophosphate (PRPP) to anthranilate to yield N-(5'-phosphoribosyl)-anthranilate (PRA). This chain is Anthranilate phosphoribosyltransferase, found in Ignicoccus hospitalis (strain KIN4/I / DSM 18386 / JCM 14125).